The primary structure comprises 355 residues: Molybdenum import ATP-binding protein ModC (355 aa).

The region spanning 1–233 (MTLIVEAKQR…PSTASDRREA (233 aa)) is the ABC transporter domain. 31-38 (GRSGSGKT) contacts ATP. One can recognise a Mop domain in the interval 291–355 (GLSALNILEA…AIIKTVALEA (65 aa)).

Belongs to the ABC transporter superfamily. Molybdate importer (TC 3.A.1.8) family. As to quaternary structure, the complex is composed of two ATP-binding proteins (ModC), two transmembrane proteins (ModB) and a solute-binding protein (ModA).

It localises to the cell inner membrane. The enzyme catalyses molybdate(out) + ATP + H2O = molybdate(in) + ADP + phosphate + H(+). Functionally, part of the ABC transporter complex ModABC involved in molybdenum import. Responsible for energy coupling to the transport system. In Rhizobium johnstonii (strain DSM 114642 / LMG 32736 / 3841) (Rhizobium leguminosarum bv. viciae), this protein is Molybdenum import ATP-binding protein ModC.